The chain runs to 341 residues: Nicotinate-nucleotide--dimethylbenzimidazole phosphoribosyltransferase (341 aa).

E310 acts as the Proton acceptor in catalysis.

The protein belongs to the CobT family.

It catalyses the reaction 5,6-dimethylbenzimidazole + nicotinate beta-D-ribonucleotide = alpha-ribazole 5'-phosphate + nicotinate + H(+). The protein operates within nucleoside biosynthesis; alpha-ribazole biosynthesis; alpha-ribazole from 5,6-dimethylbenzimidazole: step 1/2. In terms of biological role, catalyzes the synthesis of alpha-ribazole-5'-phosphate from nicotinate mononucleotide (NAMN) and 5,6-dimethylbenzimidazole (DMB). This Vibrio cholerae serotype O1 (strain ATCC 39315 / El Tor Inaba N16961) protein is Nicotinate-nucleotide--dimethylbenzimidazole phosphoribosyltransferase.